The chain runs to 322 residues: Arginase-1 (322 aa).

Residues 1–27 form a disordered region; that stretch reads MSSKPQSIGVIGAPFSKGQPRGGVEEG. Residue Ser-7 is modified to Phosphoserine. Residue Lys-17 is modified to N6-succinyllysine. A Phosphoserine modification is found at Ser-62. An N6-succinyllysine modification is found at Lys-75. 4 residues coordinate Mn(2+): His-101, Asp-124, His-126, and Asp-128. Residues 126-130, 137-139, and Asp-183 each bind substrate; these read HTDIN and TGN. The residue at position 217 (Ser-217) is a Phosphoserine. Mn(2+)-binding residues include Asp-232 and Asp-234. 2 residues coordinate substrate: Thr-246 and Glu-277.

Belongs to the arginase family. Homotrimer. Interacts with CMTM6. The cofactor is Mn(2+).

It is found in the cytoplasm. It catalyses the reaction L-arginine + H2O = urea + L-ornithine. It participates in nitrogen metabolism; urea cycle; L-ornithine and urea from L-arginine: step 1/1. This chain is Arginase-1 (ARG1), found in Bos taurus (Bovine).